We begin with the raw amino-acid sequence, 427 residues long: 3-phosphoshikimate 1-carboxyvinyltransferase (427 aa).

The 3-phosphoshikimate site is built by Lys22, Ser23, and Arg27. Phosphoenolpyruvate is bound at residue Lys22. Phosphoenolpyruvate-binding residues include Gly96 and Arg124. Residues Ser169, Ser170, Gln171, Ser197, Asp313, Asn336, and Lys340 each contribute to the 3-phosphoshikimate site. Gln171 is a phosphoenolpyruvate binding site. Catalysis depends on Asp313, which acts as the Proton acceptor. Positions 344, 386, and 411 each coordinate phosphoenolpyruvate.

This sequence belongs to the EPSP synthase family. Monomer.

The protein localises to the cytoplasm. The catalysed reaction is 3-phosphoshikimate + phosphoenolpyruvate = 5-O-(1-carboxyvinyl)-3-phosphoshikimate + phosphate. Its pathway is metabolic intermediate biosynthesis; chorismate biosynthesis; chorismate from D-erythrose 4-phosphate and phosphoenolpyruvate: step 6/7. Its function is as follows. Catalyzes the transfer of the enolpyruvyl moiety of phosphoenolpyruvate (PEP) to the 5-hydroxyl of shikimate-3-phosphate (S3P) to produce enolpyruvyl shikimate-3-phosphate and inorganic phosphate. The protein is 3-phosphoshikimate 1-carboxyvinyltransferase of Salmonella agona (strain SL483).